Consider the following 205-residue polypeptide: Recombination protein RecR (205 aa).

A C4-type zinc finger spans residues 59 to 74; that stretch reads CAMCNTFCEGGLCDIC. One can recognise a Toprim domain in the interval 82 to 177; that stretch reads RRLMVVHMPA…KVSRLSQGIP (96 aa).

Belongs to the RecR family.

Its function is as follows. May play a role in DNA repair. It seems to be involved in an RecBC-independent recombinational process of DNA repair. It may act with RecF and RecO. This chain is Recombination protein RecR, found in Neisseria meningitidis serogroup C (strain 053442).